The primary structure comprises 481 residues: Aspartyl/glutamyl-tRNA(Asn/Gln) amidotransferase subunit B (481 aa).

The protein belongs to the GatB/GatE family. GatB subfamily. As to quaternary structure, heterotrimer of A, B and C subunits.

It carries out the reaction L-glutamyl-tRNA(Gln) + L-glutamine + ATP + H2O = L-glutaminyl-tRNA(Gln) + L-glutamate + ADP + phosphate + H(+). It catalyses the reaction L-aspartyl-tRNA(Asn) + L-glutamine + ATP + H2O = L-asparaginyl-tRNA(Asn) + L-glutamate + ADP + phosphate + 2 H(+). Its function is as follows. Allows the formation of correctly charged Asn-tRNA(Asn) or Gln-tRNA(Gln) through the transamidation of misacylated Asp-tRNA(Asn) or Glu-tRNA(Gln) in organisms which lack either or both of asparaginyl-tRNA or glutaminyl-tRNA synthetases. The reaction takes place in the presence of glutamine and ATP through an activated phospho-Asp-tRNA(Asn) or phospho-Glu-tRNA(Gln). This is Aspartyl/glutamyl-tRNA(Asn/Gln) amidotransferase subunit B from Pseudomonas aeruginosa (strain LESB58).